Consider the following 1134-residue polypeptide: MMS19 nucleotide excision repair protein homolog (1134 aa).

4 HEAT repeats span residues 959–998, 1002–1047, 1050–1089, and 1092–1130; these read QRCF…NVPV, LDNT…KGQQ, SDNA…LPHR, and YPFR…ITSG.

The protein belongs to the MET18/MMS19 family. Part of a complex composed of AE7, CIA1, MMS19 and NAR1. Interacts with AE7.

It localises to the nucleus. It is found in the cytoplasm. May select specific target apoproteins to which a Fe-S cluster produced by the cytosolic iron-sulfur (Fe-S) protein assembly (CIA) pathway is transferred. This chain is MMS19 nucleotide excision repair protein homolog, found in Arabidopsis thaliana (Mouse-ear cress).